A 429-amino-acid polypeptide reads, in one-letter code: Glucose-1-phosphate adenylyltransferase (429 aa).

Alpha-D-glucose 1-phosphate-binding positions include Gly162, 177-178 (EK), and Ser209.

It belongs to the bacterial/plant glucose-1-phosphate adenylyltransferase family. As to quaternary structure, homotetramer.

It catalyses the reaction alpha-D-glucose 1-phosphate + ATP + H(+) = ADP-alpha-D-glucose + diphosphate. Its pathway is glycan biosynthesis; glycogen biosynthesis. Its function is as follows. Involved in the biosynthesis of ADP-glucose, a building block required for the elongation reactions to produce glycogen. Catalyzes the reaction between ATP and alpha-D-glucose 1-phosphate (G1P) to produce pyrophosphate and ADP-Glc. In Gloeothece citriformis (strain PCC 7424) (Cyanothece sp. (strain PCC 7424)), this protein is Glucose-1-phosphate adenylyltransferase.